Here is a 353-residue protein sequence, read N- to C-terminus: Phosphate acyltransferase (353 aa).

This sequence belongs to the PlsX family. Homodimer. Probably interacts with PlsY.

It is found in the cytoplasm. The enzyme catalyses a fatty acyl-[ACP] + phosphate = an acyl phosphate + holo-[ACP]. It functions in the pathway lipid metabolism; phospholipid metabolism. Its function is as follows. Catalyzes the reversible formation of acyl-phosphate (acyl-PO(4)) from acyl-[acyl-carrier-protein] (acyl-ACP). This enzyme utilizes acyl-ACP as fatty acyl donor, but not acyl-CoA. The protein is Phosphate acyltransferase of Rhodopseudomonas palustris (strain ATCC BAA-98 / CGA009).